The primary structure comprises 330 residues: Methionine import ATP-binding protein MetN (330 aa).

The region spanning 2–241 is the ABC transporter domain; that stretch reads IAFRGVSKVY…PSTRLHQLCF (240 aa). Position 38-45 (38-45) interacts with ATP; sequence GQSGAGKS.

Belongs to the ABC transporter superfamily. Methionine importer (TC 3.A.1.24) family. The complex is composed of two ATP-binding proteins (MetN), two transmembrane proteins (MetI) and a solute-binding protein (MetQ).

The protein resides in the cell inner membrane. It catalyses the reaction L-methionine(out) + ATP + H2O = L-methionine(in) + ADP + phosphate + H(+). The enzyme catalyses D-methionine(out) + ATP + H2O = D-methionine(in) + ADP + phosphate + H(+). Functionally, part of the ABC transporter complex MetNIQ involved in methionine import. Responsible for energy coupling to the transport system. The chain is Methionine import ATP-binding protein MetN from Myxococcus xanthus (strain DK1622).